We begin with the raw amino-acid sequence, 253 residues long: Hydroxyacylglutathione hydrolase (253 aa).

Residues H54, H56, D58, H59, H112, D131, and H169 each contribute to the Zn(2+) site.

Belongs to the metallo-beta-lactamase superfamily. Glyoxalase II family. As to quaternary structure, monomer. The cofactor is Zn(2+).

It carries out the reaction an S-(2-hydroxyacyl)glutathione + H2O = a 2-hydroxy carboxylate + glutathione + H(+). It functions in the pathway secondary metabolite metabolism; methylglyoxal degradation; (R)-lactate from methylglyoxal: step 2/2. Thiolesterase that catalyzes the hydrolysis of S-D-lactoyl-glutathione to form glutathione and D-lactic acid. This is Hydroxyacylglutathione hydrolase from Bartonella quintana (strain Toulouse) (Rochalimaea quintana).